A 297-amino-acid chain; its full sequence is uncharacterized protein (297 aa).

A signal peptide spans 1-24 (MRAINKFLITVCIALLASVAVALG). 15 residues coordinate heme: Cys58, Cys61, His62, Cys141, Cys144, His145, Cys167, Cys170, His171, Cys223, Cys226, His227, Cys264, Cys267, and His268. The segment at 277–297 (TNSVDTWSREGEGAEVQQLPH) is disordered.

Post-translationally, binds 5 heme groups per subunit.

This is an uncharacterized protein from Archaeoglobus fulgidus (strain ATCC 49558 / DSM 4304 / JCM 9628 / NBRC 100126 / VC-16).